The following is a 155-amino-acid chain: Small ribosomal subunit protein uS7 (155 aa).

Belongs to the universal ribosomal protein uS7 family. In terms of assembly, part of the 30S ribosomal subunit. Contacts proteins S9 and S11.

One of the primary rRNA binding proteins, it binds directly to 16S rRNA where it nucleates assembly of the head domain of the 30S subunit. Is located at the subunit interface close to the decoding center, probably blocks exit of the E-site tRNA. The sequence is that of Small ribosomal subunit protein uS7 from Chlorobium limicola (strain DSM 245 / NBRC 103803 / 6330).